The sequence spans 122 residues: Small ribosomal subunit protein uS13 (122 aa).

Residues arginine 99–lysine 122 form a disordered region.

This sequence belongs to the universal ribosomal protein uS13 family. As to quaternary structure, part of the 30S ribosomal subunit. Forms a loose heterodimer with protein S19. Forms two bridges to the 50S subunit in the 70S ribosome.

Located at the top of the head of the 30S subunit, it contacts several helices of the 16S rRNA. In the 70S ribosome it contacts the 23S rRNA (bridge B1a) and protein L5 of the 50S subunit (bridge B1b), connecting the 2 subunits; these bridges are implicated in subunit movement. Contacts the tRNAs in the A and P-sites. This Bradyrhizobium diazoefficiens (strain JCM 10833 / BCRC 13528 / IAM 13628 / NBRC 14792 / USDA 110) protein is Small ribosomal subunit protein uS13.